A 200-amino-acid chain; its full sequence is GTP cyclohydrolase 1 (200 aa).

Zn(2+)-binding residues include C87, H90, and C158.

Belongs to the GTP cyclohydrolase I family. Toroid-shaped homodecamer, composed of two pentamers of five dimers.

The enzyme catalyses GTP + H2O = 7,8-dihydroneopterin 3'-triphosphate + formate + H(+). It participates in cofactor biosynthesis; 7,8-dihydroneopterin triphosphate biosynthesis; 7,8-dihydroneopterin triphosphate from GTP: step 1/1. This is GTP cyclohydrolase 1 from Xanthomonas euvesicatoria pv. vesicatoria (strain 85-10) (Xanthomonas campestris pv. vesicatoria).